The chain runs to 230 residues: 3-beta-hydroxysteroid-Delta(8),Delta(7)-isomerase (230 aa).

Position 2 is an N-acetylthreonine (Thr2). 4 consecutive transmembrane segments (helical) span residues 29 to 49 (WHIL…TWLL), 66 to 86 (LCWF…FSFY), 121 to 141 (MESV…IAFL), and 185 to 205 (FWFY…ILVF). One can recognise an EXPERA domain in the interval 61 to 204 (GRRLALCWFA…IWLVIPGILV (144 aa)).

This sequence belongs to the EBP family. As to expression, expressed in liver.

It localises to the endoplasmic reticulum membrane. Its subcellular location is the nucleus envelope. It is found in the cytoplasmic vesicle. The enzyme catalyses lathosterol = 5alpha-cholest-8-en-3beta-ol. The catalysed reaction is zymosterol = 5alpha-cholesta-7,24-dien-3beta-ol. It catalyses the reaction 5,6alpha-epoxy-5alpha-cholestan-3beta-ol + H2O = 5alpha-cholestane-3beta,5,6beta-triol. It carries out the reaction 5,6beta-epoxy-5beta-cholestan-3beta-ol + H2O = 5alpha-cholestane-3beta,5,6beta-triol. The protein operates within steroid biosynthesis; cholesterol biosynthesis. Enzymatic activity is induced by 25-hydroxycholesterol, cholestyramine and lovastatin. Its function is as follows. Isomerase that catalyzes the conversion of Delta(8)-sterols to their corresponding Delta(7)-isomers. Component of the microsomal antiestrogen binding site (AEBS), a multiproteic complex at the ER membrane that consists of an association between EBP and 7-dehydrocholesterol reductase/DHCR7. This complex is responsible for cholesterol-5,6-epoxide hydrolase (ChEH) activity, which consists in the hydration of cholesterol-5,6-epoxides (5,6-EC) into cholestane-3beta,5alpha,6beta-triol (CT). The precise role of each component of this complex has not been described yet. In Rattus norvegicus (Rat), this protein is 3-beta-hydroxysteroid-Delta(8),Delta(7)-isomerase.